The sequence spans 487 residues: MELNASLTLILPEIVMAISAMALILITAYVGDKTARLVSILAAATLGAAAVMVAPALTSGASGPDTVAFGGQFLADSFASFAKILIYLSAIGCLMIAPAFFDRLKAMRPEYPVLVLLATLGMSIMVSAGDLITLYIGLELNSLAAYVLASFLRNDTRSAEAGLKYFVLGALASGILLYGMSLVYGFTGTTDFEGVRGALTGDMSTGALFGVIFVLAGLAFKIAAVPFHMWTPDVYEGAPTPVTTFFATAPKVAAVALTARVALSPFGEQTEAWQQIVIFAALASIVLGALGAIGQTNLKRLLAYSSINNVGFILIGLAASTVAGLSAMLTYLAIYVVMALGSFVALLMLKDEDGTPLETFDDIAGLSTTRPALAWCLLFLMFSLAGIPPLLGFWGKFVVFQAAVQADMVLLAALGIAASVIGAFYYIKFVKVMFFDDAVDRVKGTSDTAHWVLLILAAVVVSPLGYLLTGWLGGLTDSAASALFIAS.

Helical transmembrane passes span 7 to 27, 37 to 57, 81 to 101, 112 to 132, 166 to 186, 207 to 227, 237 to 257, 276 to 296, 307 to 327, 329 to 349, 373 to 393, 407 to 427, and 452 to 472; these read LTLI…ILIT, LVSI…APAL, FAKI…PAFF, PVLV…GDLI, FVLG…VYGF, ALFG…AVPF, GAPT…AVAL, IVIF…IGQT, INNV…GLSA, LTYL…LLML, LAWC…LLGF, DMVL…FYYI, and VLLI…TGWL.

Belongs to the complex I subunit 2 family. As to quaternary structure, NDH-1 is composed of 14 different subunits. Subunits NuoA, H, J, K, L, M, N constitute the membrane sector of the complex.

The protein resides in the cell inner membrane. The catalysed reaction is a quinone + NADH + 5 H(+)(in) = a quinol + NAD(+) + 4 H(+)(out). NDH-1 shuttles electrons from NADH, via FMN and iron-sulfur (Fe-S) centers, to quinones in the respiratory chain. The immediate electron acceptor for the enzyme in this species is believed to be ubiquinone. Couples the redox reaction to proton translocation (for every two electrons transferred, four hydrogen ions are translocated across the cytoplasmic membrane), and thus conserves the redox energy in a proton gradient. This is NADH-quinone oxidoreductase subunit N from Erythrobacter litoralis (strain HTCC2594).